We begin with the raw amino-acid sequence, 309 residues long: tRNA-cytidine(32) 2-sulfurtransferase (309 aa).

Positions 45–50 (SGGKDS) match the PP-loop motif motif. Cysteine 120, cysteine 123, and cysteine 211 together coordinate [4Fe-4S] cluster.

It belongs to the TtcA family. Homodimer. The cofactor is Mg(2+). [4Fe-4S] cluster serves as cofactor.

It localises to the cytoplasm. It catalyses the reaction cytidine(32) in tRNA + S-sulfanyl-L-cysteinyl-[cysteine desulfurase] + AH2 + ATP = 2-thiocytidine(32) in tRNA + L-cysteinyl-[cysteine desulfurase] + A + AMP + diphosphate + H(+). Its pathway is tRNA modification. Catalyzes the ATP-dependent 2-thiolation of cytidine in position 32 of tRNA, to form 2-thiocytidine (s(2)C32). The sulfur atoms are provided by the cysteine/cysteine desulfurase (IscS) system. This chain is tRNA-cytidine(32) 2-sulfurtransferase, found in Psychromonas ingrahamii (strain DSM 17664 / CCUG 51855 / 37).